The primary structure comprises 193 residues: Ion-translocating oxidoreductase complex subunit A (193 aa).

6 consecutive transmembrane segments (helical) span residues 5–25, 47–67, 72–92, 102–122, 134–154, and 171–191; these read LLLF…FLGL, FVMT…LIPL, LRTL…EMVV, LLGI…VALL, ALYG…FAAI, and AIAL…SGLV.

The protein belongs to the NqrDE/RnfAE family. The complex is composed of six subunits: RnfA, RnfB, RnfC, RnfD, RnfE and RnfG.

The protein localises to the cell inner membrane. Functionally, part of a membrane-bound complex that couples electron transfer with translocation of ions across the membrane. The chain is Ion-translocating oxidoreductase complex subunit A from Citrobacter koseri (strain ATCC BAA-895 / CDC 4225-83 / SGSC4696).